Reading from the N-terminus, the 491-residue chain is Monothiol glutaredoxin-S11 (491 aa).

Glutaredoxin domains follow at residues Asn151 to Leu253, Lys287 to Ala389, and Glu394 to Glu491. A glutathione-binding site is contributed by Lys411. Cys419 is a binding site for [2Fe-2S] cluster. Residues Arg448, Phe460, and Cys473–Asp474 contribute to the glutathione site.

It belongs to the glutaredoxin family. CGFS subfamily.

It localises to the cytoplasm. May only reduce GSH-thiol disulfides, but not protein disulfides. The chain is Monothiol glutaredoxin-S11 (GRXS11) from Oryza sativa subsp. japonica (Rice).